Consider the following 97-residue polypeptide: Co-chaperonin GroES (97 aa).

This sequence belongs to the GroES chaperonin family. Heptamer of 7 subunits arranged in a ring. Interacts with the chaperonin GroEL.

Its subcellular location is the cytoplasm. In terms of biological role, together with the chaperonin GroEL, plays an essential role in assisting protein folding. The GroEL-GroES system forms a nano-cage that allows encapsulation of the non-native substrate proteins and provides a physical environment optimized to promote and accelerate protein folding. GroES binds to the apical surface of the GroEL ring, thereby capping the opening of the GroEL channel. The chain is Co-chaperonin GroES from Stutzerimonas stutzeri (strain A1501) (Pseudomonas stutzeri).